The chain runs to 138 residues: MSARRTSREIAVMALYQLELTQPPLKEVLKFKWYDKKTEPEERDFAVSIVNGVVKNQEQIDTLIKKYSKNWDFSRISIVNKAILRLSIYALLYTWEVPKNVTIDEAVELTKEFESEESARFVNGVLDAILKNEIKSDG.

The protein belongs to the NusB family.

Involved in transcription antitermination. Required for transcription of ribosomal RNA (rRNA) genes. Binds specifically to the boxA antiterminator sequence of the ribosomal RNA (rrn) operons. The chain is Transcription antitermination protein NusB from Leptospira interrogans serogroup Icterohaemorrhagiae serovar copenhageni (strain Fiocruz L1-130).